Consider the following 69-residue polypeptide: Sec-independent protein translocase protein TatA (69 aa).

A helical transmembrane segment spans residues 1–21 (MFGKLGMPELVLIFAVALVIF).

The protein belongs to the TatA/E family. In terms of assembly, forms a complex with TatC.

It localises to the cell membrane. Its function is as follows. Part of the twin-arginine translocation (Tat) system that transports large folded proteins containing a characteristic twin-arginine motif in their signal peptide across membranes. TatA could form the protein-conducting channel of the Tat system. This chain is Sec-independent protein translocase protein TatA, found in Alkaliphilus metalliredigens (strain QYMF).